We begin with the raw amino-acid sequence, 95 residues long: Small ribosomal subunit protein uS19 (95 aa).

This sequence belongs to the universal ribosomal protein uS19 family.

In terms of biological role, protein S19 forms a complex with S13 that binds strongly to the 16S ribosomal RNA. This chain is Small ribosomal subunit protein uS19 (rpsS), found in Treponema pallidum (strain Nichols).